The sequence spans 88 residues: Small ribosomal subunit protein bS20 (88 aa).

The tract at residues 1–25 (MANTPSAKKAARKIERRTAVNRARR) is disordered.

It belongs to the bacterial ribosomal protein bS20 family.

Binds directly to 16S ribosomal RNA. The protein is Small ribosomal subunit protein bS20 of Azorhizobium caulinodans (strain ATCC 43989 / DSM 5975 / JCM 20966 / LMG 6465 / NBRC 14845 / NCIMB 13405 / ORS 571).